The primary structure comprises 575 residues: Probable methionine--tRNA ligase, mitochondrial (575 aa).

Positions 52–62 (FYVNGPPHIGH) match the 'HIGH' region motif. The short motif at 352–356 (KMSKS) is the 'KMSKS' region element. K355 contacts ATP.

It belongs to the class-I aminoacyl-tRNA synthetase family.

Its subcellular location is the mitochondrion matrix. The enzyme catalyses tRNA(Met) + L-methionine + ATP = L-methionyl-tRNA(Met) + AMP + diphosphate. This is Probable methionine--tRNA ligase, mitochondrial (mmetS) from Dictyostelium discoideum (Social amoeba).